Reading from the N-terminus, the 612-residue chain is BTB/POZ domain-containing protein 9 (612 aa).

The BTB domain occupies 36-104 (GDVTFVVEKK…IYTGRATLTD (69 aa)). The 99-residue stretch at 142–240 (VCMTFDVASL…SLTELLNVVR (99 aa)) folds into the BACK domain. A disordered region spans residues 559–612 (QQSTQKEDSSEEPGTGDLSTPSQQLDPHAPRAPSASSLPPSPGPNLHSPNQQNQ). Low complexity predominate over residues 589–612 (RAPSASSLPPSPGPNLHSPNQQNQ).

In terms of tissue distribution, detected throughout the gray matter of the spinal cord including the motor neurons (at protein level). In the brain, detected in the neurons of the hippocampus and in the Purkinje cells of the cerebellum (at protein level). Also detected in the terospenial cortex, bed nucleus of the stria terminalis (BST) and the ventrolateral thalamus (VL) (at protein level).

This is BTB/POZ domain-containing protein 9 (Btbd9) from Rattus norvegicus (Rat).